The chain runs to 486 residues: Transcription factor aptf-4 (486 aa).

Disordered stretches follow at residues 25–49 (CEPSPSSSSSRKRPADSENGNSAKM) and 150–173 (LSTTSANFTPDWNTTTNGPCNQEK). The span at 150-169 (LSTTSANFTPDWNTTTNGPC) shows a compositional bias: polar residues. Residues 301 to 430 (QRQRKVTCFS…IVEQAALYCE (130 aa)) form an H-S-H (helix-span-helix), dimerization region.

It belongs to the AP-2 family. As to quaternary structure, binds DNA as a dimer.

Its subcellular location is the nucleus. Sequence-specific DNA-binding protein that interacts with enhancer elements to regulate transcription of selected genes. Required for neuroblast and epidermal morphogenesis, perhaps acting in cooperation with transcription factor aptf-2. The chain is Transcription factor aptf-4 from Caenorhabditis elegans.